The primary structure comprises 337 residues: Holliday junction branch migration complex subunit RuvB (337 aa).

Residues 1 to 27 form a disordered region; the sequence is MIEADRLVHAQPQGTEERDEQIDRAMR. Residues 4-187 are large ATPase domain (RuvB-L); that stretch reads ADRLVHAQPQ…FGIPLRLEFY (184 aa). Residues R27, G68, K71, T72, T73, 134–136, R177, Y187, and R224 each bind ATP; that span reads EDY. T72 contacts Mg(2+). Residues 188–258 are small ATPAse domain (RuvB-S); that stretch reads NVKDLSSIVT…VAESALDMLD (71 aa). Residues 261–337 form a head domain (RuvB-H) region; it reads VEGFDYMDRK…YQHFNLIQPE (77 aa). R297, R316, and R321 together coordinate DNA.

It belongs to the RuvB family. In terms of assembly, homohexamer. Forms an RuvA(8)-RuvB(12)-Holliday junction (HJ) complex. HJ DNA is sandwiched between 2 RuvA tetramers; dsDNA enters through RuvA and exits via RuvB. An RuvB hexamer assembles on each DNA strand where it exits the tetramer. Each RuvB hexamer is contacted by two RuvA subunits (via domain III) on 2 adjacent RuvB subunits; this complex drives branch migration. In the full resolvosome a probable DNA-RuvA(4)-RuvB(12)-RuvC(2) complex forms which resolves the HJ.

Its subcellular location is the cytoplasm. The enzyme catalyses ATP + H2O = ADP + phosphate + H(+). Functionally, the RuvA-RuvB-RuvC complex processes Holliday junction (HJ) DNA during genetic recombination and DNA repair, while the RuvA-RuvB complex plays an important role in the rescue of blocked DNA replication forks via replication fork reversal (RFR). RuvA specifically binds to HJ cruciform DNA, conferring on it an open structure. The RuvB hexamer acts as an ATP-dependent pump, pulling dsDNA into and through the RuvAB complex. RuvB forms 2 homohexamers on either side of HJ DNA bound by 1 or 2 RuvA tetramers; 4 subunits per hexamer contact DNA at a time. Coordinated motions by a converter formed by DNA-disengaged RuvB subunits stimulates ATP hydrolysis and nucleotide exchange. Immobilization of the converter enables RuvB to convert the ATP-contained energy into a lever motion, pulling 2 nucleotides of DNA out of the RuvA tetramer per ATP hydrolyzed, thus driving DNA branch migration. The RuvB motors rotate together with the DNA substrate, which together with the progressing nucleotide cycle form the mechanistic basis for DNA recombination by continuous HJ branch migration. Branch migration allows RuvC to scan DNA until it finds its consensus sequence, where it cleaves and resolves cruciform DNA. This is Holliday junction branch migration complex subunit RuvB from Shewanella loihica (strain ATCC BAA-1088 / PV-4).